The chain runs to 373 residues: Valienol-1-phosphate guanylyltransferase (373 aa).

Residues Gly177 and 192–193 contribute to the substrate site; that span reads EK.

It belongs to the bacterial/plant glucose-1-phosphate adenylyltransferase family. It depends on Mg(2+) as a cofactor.

It carries out the reaction valienol 1-phosphate + GTP + H(+) = GDP-valienol + diphosphate. Its function is as follows. Involved in the biosynthesis of the antifungal agent validamycin A. Catalyzes the conversion of valienol 1-phosphate to GDP-valienol and less effectively to ADP-valienol or other NDP derivatives. This Streptomyces hygroscopicus subsp. limoneus protein is Valienol-1-phosphate guanylyltransferase.